Reading from the N-terminus, the 206-residue chain is MGRTLVLIRHGQSEWNLKNLFTGWKDPDLTEKGHAEAIAAGKKLKETGVKFDIAYTSALQRAQKTAQHILEQMGQSDLEMIKSAALNERNYGDLSGLNKDEVRQQWGEEQVKMWRRSYTIAPPNGESLRDTGARIWPYYLYHIQPHILRSQTVLIAAHGNSLRALMMALEGLNGEEIISQELATGIPIIYTFNPDSTISSKTIITP.

Residues 9–16, 22–23, Arg61, 88–91, Lys99, 115–116, and 159–160 each bind substrate; these read RHGQSEWN, TG, ERNY, RR, and GN. Catalysis depends on His10, which acts as the Tele-phosphohistidine intermediate. The Proton donor/acceptor role is filled by Glu88.

The protein belongs to the phosphoglycerate mutase family. BPG-dependent PGAM subfamily. In terms of assembly, homodimer.

It catalyses the reaction (2R)-2-phosphoglycerate = (2R)-3-phosphoglycerate. Its pathway is carbohydrate degradation; glycolysis; pyruvate from D-glyceraldehyde 3-phosphate: step 3/5. Catalyzes the interconversion of 2-phosphoglycerate and 3-phosphoglycerate. The sequence is that of 2,3-bisphosphoglycerate-dependent phosphoglycerate mutase from Bartonella tribocorum (strain CIP 105476 / IBS 506).